The primary structure comprises 152 residues: UPF0178 protein YaiI (152 aa).

The protein belongs to the UPF0178 family.

This chain is UPF0178 protein YaiI, found in Escherichia coli O17:K52:H18 (strain UMN026 / ExPEC).